We begin with the raw amino-acid sequence, 477 residues long: Nuclear receptor subfamily 6 group A member 1-A (477 aa).

A DNA-binding region (nuclear receptor) is located at residues 40-115 (QRSCLICGDR…MGMNRKAIRE (76 aa)). 2 consecutive NR C4-type zinc fingers follow at residues 43–63 (CLIC…CEGC) and 79–98 (CSRD…CQYC). Positions 147–187 (DEANMPEHTWGNNGDSDHSSPGNGVSDGNQPSPVSTLSSNR) are disordered. Polar residues predominate over residues 156-187 (WGNNGDSDHSSPGNGVSDGNQPSPVSTLSSNR). The 232-residue stretch at 230 to 461 (QSHTLIGQLV…HSCKSSLSSY (232 aa)) folds into the NR LBD domain.

This sequence belongs to the nuclear hormone receptor family. NR6 subfamily. Homodimer. As to expression, expressed in germ cells, being predominant in previtellogenic oocytes in the ovary and in spermatocytes in the testis.

It is found in the nucleus. Probable orphan nuclear receptor. Binds to a response element containing repeats of the motif 5'-AGGTCA-3'. This Danio rerio (Zebrafish) protein is Nuclear receptor subfamily 6 group A member 1-A.